The following is a 185-amino-acid chain: Ribosome-recycling factor (185 aa).

Belongs to the RRF family.

It localises to the cytoplasm. Its function is as follows. Responsible for the release of ribosomes from messenger RNA at the termination of protein biosynthesis. May increase the efficiency of translation by recycling ribosomes from one round of translation to another. This is Ribosome-recycling factor from Aliivibrio salmonicida (strain LFI1238) (Vibrio salmonicida (strain LFI1238)).